The sequence spans 154 residues: RNA-binding protein PAB1135 (154 aa).

As to quaternary structure, homodimer in solution.

Its function is as follows. In vitro, binds efficiently double-stranded RNAs in a non-sequence specific manner. The sequence is that of RNA-binding protein PAB1135 from Pyrococcus abyssi (strain GE5 / Orsay).